A 236-amino-acid polypeptide reads, in one-letter code: Uridylate kinase (236 aa).

Position 10-13 (10-13 (KLSG)) interacts with ATP. Glycine 52 is a UMP binding site. 2 residues coordinate ATP: glycine 53 and arginine 57. UMP-binding positions include aspartate 72 and 133 to 140 (TGNPFFTT). The ATP site is built by threonine 160, tyrosine 166, and aspartate 169.

Belongs to the UMP kinase family. In terms of assembly, homohexamer.

Its subcellular location is the cytoplasm. It catalyses the reaction UMP + ATP = UDP + ADP. The protein operates within pyrimidine metabolism; CTP biosynthesis via de novo pathway; UDP from UMP (UMPK route): step 1/1. Its activity is regulated as follows. Inhibited by UTP. Functionally, catalyzes the reversible phosphorylation of UMP to UDP. The polypeptide is Uridylate kinase (Polaromonas naphthalenivorans (strain CJ2)).